Reading from the N-terminus, the 227-residue chain is Cytochrome c oxidase subunit 2 (227 aa).

Residues 1-26 (MATWSNFNLQNSASPLMEQIIFFHDH) lie on the Mitochondrial intermembrane side of the membrane. A helical membrane pass occupies residues 27 to 51 (TLVILIMITILVGYLMISLFFNSYI). Residues 52-62 (NRFLLEGQMIE) lie on the Mitochondrial matrix side of the membrane. The chain crosses the membrane as a helical span at residues 63-81 (LIWTILPAITLIFIALPSL). Residues 82–227 (RLLYLLDELN…NFINWINNYS (146 aa)) are Mitochondrial intermembrane-facing. Cu cation-binding residues include H161, C196, E198, C200, H204, and M207. Mg(2+) is bound at residue E198.

The protein belongs to the cytochrome c oxidase subunit 2 family. In terms of assembly, component of the cytochrome c oxidase (complex IV, CIV), a multisubunit enzyme composed of a catalytic core of 3 subunits and several supernumerary subunits. The complex exists as a monomer or a dimer and forms supercomplexes (SCs) in the inner mitochondrial membrane with ubiquinol-cytochrome c oxidoreductase (cytochrome b-c1 complex, complex III, CIII). The cofactor is Cu cation.

The protein localises to the mitochondrion inner membrane. The enzyme catalyses 4 Fe(II)-[cytochrome c] + O2 + 8 H(+)(in) = 4 Fe(III)-[cytochrome c] + 2 H2O + 4 H(+)(out). Component of the cytochrome c oxidase, the last enzyme in the mitochondrial electron transport chain which drives oxidative phosphorylation. The respiratory chain contains 3 multisubunit complexes succinate dehydrogenase (complex II, CII), ubiquinol-cytochrome c oxidoreductase (cytochrome b-c1 complex, complex III, CIII) and cytochrome c oxidase (complex IV, CIV), that cooperate to transfer electrons derived from NADH and succinate to molecular oxygen, creating an electrochemical gradient over the inner membrane that drives transmembrane transport and the ATP synthase. Cytochrome c oxidase is the component of the respiratory chain that catalyzes the reduction of oxygen to water. Electrons originating from reduced cytochrome c in the intermembrane space (IMS) are transferred via the dinuclear copper A center (CU(A)) of subunit 2 and heme A of subunit 1 to the active site in subunit 1, a binuclear center (BNC) formed by heme A3 and copper B (CU(B)). The BNC reduces molecular oxygen to 2 water molecules using 4 electrons from cytochrome c in the IMS and 4 protons from the mitochondrial matrix. This chain is Cytochrome c oxidase subunit 2 (COII), found in Choristoneura fumiferana (Spruce budworm moth).